Consider the following 1007-residue polypeptide: Beta-galactosidase (1007 aa).

A disordered region spans residues 29-48; the sequence is TIPPHSDHESFQSQEELEEG. Catalysis depends on glutamate 465, which acts as the Proton donor. Glutamate 532 serves as the catalytic Nucleophile.

The protein belongs to the glycosyl hydrolase 2 family. In terms of assembly, monomer.

It carries out the reaction Hydrolysis of terminal non-reducing beta-D-galactose residues in beta-D-galactosides.. This is Beta-galactosidase (lacZ) from Lactobacillus delbrueckii subsp. bulgaricus.